The primary structure comprises 330 residues: Methionyl-tRNA formyltransferase (330 aa).

112–115 (SLLP) serves as a coordination point for (6S)-5,6,7,8-tetrahydrofolate.

This sequence belongs to the Fmt family.

It carries out the reaction L-methionyl-tRNA(fMet) + (6R)-10-formyltetrahydrofolate = N-formyl-L-methionyl-tRNA(fMet) + (6S)-5,6,7,8-tetrahydrofolate + H(+). Its function is as follows. Attaches a formyl group to the free amino group of methionyl-tRNA(fMet). The formyl group appears to play a dual role in the initiator identity of N-formylmethionyl-tRNA by promoting its recognition by IF2 and preventing the misappropriation of this tRNA by the elongation apparatus. The polypeptide is Methionyl-tRNA formyltransferase (Synechocystis sp. (strain ATCC 27184 / PCC 6803 / Kazusa)).